Reading from the N-terminus, the 260-residue chain is Carbonic anhydrase 3 (260 aa).

N-acetylalanine is present on alanine 2. In terms of domain architecture, Alpha-carbonic anhydrase spans 3–259 (KEWGYASHNG…INNRVVRASF (257 aa)). Phosphoserine is present on residues serine 29, serine 43, serine 48, serine 50, and serine 55. Residues 64–67 (KTCR) form an involved in proton transfer region. Threonine 73 is modified (phosphothreonine). Zn(2+)-binding residues include histidine 94, histidine 96, and histidine 119. The residue at position 127 (tyrosine 127) is a Phosphotyrosine. Phosphothreonine is present on residues threonine 129 and threonine 176. Residues cysteine 182 and cysteine 187 each carry the S-glutathionyl cysteine modification. Position 198–199 (198–199 (TT)) interacts with substrate. The residue at position 216 (threonine 216) is a Phosphothreonine. The residue at position 219 (serine 219) is a Phosphoserine.

The protein belongs to the alpha-carbonic anhydrase family. Zn(2+) serves as cofactor. In terms of processing, S-thiolated both by thiol-disulfide exchange with glutathione disulfide and by oxyradical-initiated S-thiolation with reduced glutathione. S-glutathionylated in hepatocytes under oxidative stress. Muscle specific.

It localises to the cytoplasm. The catalysed reaction is hydrogencarbonate + H(+) = CO2 + H2O. With respect to regulation, activated by proton donors such as imidazole and the dipeptide histidylhistidine. Inhibited by coumarins and sulfonamide derivatives such as acetazolamide. Reversible hydration of carbon dioxide. In Homo sapiens (Human), this protein is Carbonic anhydrase 3.